We begin with the raw amino-acid sequence, 61 residues long: Small ribosomal subunit protein uS14 (61 aa).

Zn(2+)-binding residues include Cys-24, Cys-27, Cys-40, and Cys-43.

Belongs to the universal ribosomal protein uS14 family. Zinc-binding uS14 subfamily. As to quaternary structure, part of the 30S ribosomal subunit. Contacts proteins S3 and S10. The cofactor is Zn(2+).

Its function is as follows. Binds 16S rRNA, required for the assembly of 30S particles and may also be responsible for determining the conformation of the 16S rRNA at the A site. This chain is Small ribosomal subunit protein uS14, found in Mycoplasma capricolum subsp. capricolum (strain California kid / ATCC 27343 / NCTC 10154).